A 612-amino-acid chain; its full sequence is Alpha-1,3-galactosidase B (612 aa).

Residues 1–19 form the signal peptide; sequence MKWYLWGAVVLLYSLFGSA. A lipid anchor (N-palmitoyl cysteine) is attached at Cys20. Cys20 carries S-diacylglycerol cysteine lipidation. PbH1 repeat units lie at residues 431–453, 454–476, and 487–536; these read TPTV…LFST, PRQT…LLCG, and CRNV…VIDA.

The protein belongs to the glycosyl hydrolase 110 family. B subfamily.

The protein resides in the cell membrane. It catalyses the reaction Hydrolysis of terminal, non-reducing branched (1-&gt;3)-alpha-D-galactosidic residues, producing free D-galactose.. The catalysed reaction is Hydrolysis of terminal, non-reducing linear (1-&gt;3)-alpha-D-galactosidic residues, producing free D-galactose.. It carries out the reaction Hydrolysis of terminal, non-reducing alpha-D-galactose residues in alpha-D-galactosides, including galactose oligosaccharides, galactomannans and galactolipids.. Alpha-galactosidase. Removes both branched alpha-1,3-linked galactose residues of blood group B antigens and linear alpha-1,3-linked galactose structures. The protein is Alpha-1,3-galactosidase B (glaB) of Parabacteroides distasonis (strain ATCC 8503 / DSM 20701 / CIP 104284 / JCM 5825 / NCTC 11152).